We begin with the raw amino-acid sequence, 302 residues long: Glutaminase (302 aa).

Substrate contacts are provided by Ser61, Asn111, Glu155, Asn162, Tyr186, Tyr238, and Val256.

It belongs to the glutaminase family. Homotetramer.

It carries out the reaction L-glutamine + H2O = L-glutamate + NH4(+). The sequence is that of Glutaminase from Pseudomonas fluorescens (strain ATCC BAA-477 / NRRL B-23932 / Pf-5).